Here is a 591-residue protein sequence, read N- to C-terminus: Metastasis-associated protein MTA3 (591 aa).

Residues 1 to 147 enclose the BAH domain; sequence MAANMYRVGD…PSVKTLLADK (147 aa). Residues 148–258 form the ELM2 domain; sequence GEIRVGPKYQ…SAISVLVPLG (111 aa). One can recognise an SANT domain in the interval 265–317; it reads DEMEEWSASEACLFEEALEKYGKDFNDIRQDFLPWKSLTSIIEYYYMWKTTDR. Residues 377 to 404 form a GATA-type; atypical zinc finger; sequence CESCYATQSHQWYSWGPPNMQCRLCATC. The segment at 417–456 is disordered; it reads PTQSDEEKSPSPTAEDPRARSHMSRQALQGMPVRNTGSPK. Basic and acidic residues predominate over residues 421-435; that stretch reads DEEKSPSPTAEDPRA. Phosphoserine is present on residues Ser425 and Ser427. Thr452 carries the post-translational modification Phosphothreonine. Residue Ser516 is modified to Phosphoserine.

It belongs to the metastasis-associated protein family. In terms of assembly, component of the nucleosome remodeling and deacetylase (NuRD) repressor complex, composed of core proteins MTA1, MTA2, MTA3, RBBP4, RBBP7, HDAC1, HDAC2, MBD2, MBD3, and peripherally associated proteins CDK2AP1, CDK2AP2, GATAD2A, GATAD2B, CHD3, CHD4 and CHD5. The exact stoichiometry of the NuRD complex is unknown, and some subunits such as MBD2 and MBD3, GATAD2A and GATAD2B, and CHD3, CHD4 and CHD5 define mutually exclusive NuRD complexes. Interacts with BCL6. Interacts with NACC2. Interacts with PWWP2B. In terms of tissue distribution, expressed in heart, brain, spleen, lung, liver and kidney.

The protein resides in the nucleus. It localises to the cytoplasm. Acts as a component of the histone deacetylase NuRD complex which participates in the remodeling of chromatin. Plays a role in maintenance of the normal epithelial architecture through the repression of SNAI1 transcription in a histone deacetylase-dependent manner, and thus the regulation of E-cadherin levels. Contributes to transcriptional repression by BCL6. The polypeptide is Metastasis-associated protein MTA3 (Mta3) (Mus musculus (Mouse)).